Consider the following 688-residue polypeptide: PR domain zinc finger protein 8 (688 aa).

The 116-residue stretch at 16–131 folds into the SET domain; sequence KAVQQCLTDI…KDEELLVWYG (116 aa). Residue Tyr-130 coordinates S-adenosyl-L-methionine. The segment at 154-182 adopts a C2H2-type 1 zinc-finger fold; it reads YTCLECSQRFQFEFPYVAHLRFRCPKRLH. Disordered stretches follow at residues 184 to 309 and 397 to 506; these read TDAN…GCKG and EEAA…PARS. The span at 192–208 shows a compositional bias: gly residues; it reads QGGGLGTKDHGGGGGGK. 2 stretches are compositionally biased toward low complexity: residues 209 to 219 and 275 to 284; these read EQQQQQQQQQQ and GSSSCVAAPG. 2 stretches are compositionally biased toward gly residues: residues 414 to 424 and 470 to 489; these read AGGGVAGGGSN and LGGGGGAGTAGTAGGSGGGQ. C2H2-type zinc fingers lie at residues 624 to 647 and 665 to 687; these read NWCAKCNASFRMTSDLVYHMRSHH and LKCPICNESFRERHHLSRHMTSH.

Belongs to the class V-like SAM-binding methyltransferase superfamily. Interacts with BHLHE22. Interacts with EPM2A and NHLRC1. This interaction sequesters EPM2A and NHLRC1 to the nucleus. As to expression, expressed in brain, heart, liver, testes, retina. Highest expression is observed in the retina and hippocampus; moderately expressed in the cortex and cerebellum. In the retina, it is expressed in bipolar and amacrine cells.

It localises to the nucleus. Its function is as follows. Probable histone methyltransferase, preferentially acting on 'Lys-9' of histone H3. Histone methyltransferase activity has not been confirmed in other species. Involved in the control of steroidogenesis through transcriptional repression of steroidogenesis marker genes such as CYP17A1 and LHCGR. Forms with BHLHE22 a transcriptional repressor complex controlling genes involved in neural development and neuronal differentiation. In the retina, it is required for rod bipolar and type 2 OFF-cone bipolar cell survival. The polypeptide is PR domain zinc finger protein 8 (Prdm8) (Mus musculus (Mouse)).